Here is an 86-residue protein sequence, read N- to C-terminus: UPF0147 protein PYRAB16980 (86 aa).

It belongs to the UPF0147 family.

This chain is UPF0147 protein PYRAB16980, found in Pyrococcus abyssi (strain GE5 / Orsay).